The following is a 448-amino-acid chain: MSNESFPETLENLLSTLQTKQQNAIQSEVIKWLHSFCETFHLKIHCHKQFIPSGEKKWPKIPTQETQENTQPPHHVHRVVLSRAQPLKVQESLLTTMCNGLVLDANTWTCLAVPPPAPFQQVTRQVQHYYRNKFYEVAAIQDGTLLTIYYWDDPEHGPSWCLASTHGYDVSNYCWIGDKTFAELVYELLQQHSTCNVTLEKNKTRGTRLFFNELNRDYCYTIGIRHHNLQPLIHDPQNIWAIQSTNLKTLKTVYPEYYGYVGIPGIQSQVPELPQFELPYLIRSYRTAMNQAKNAIKNGKKEKEYFNYGYLLISRAPAITKSISIVLLKSPLLVFLQKSVYQKKYNISSSLRLEFIILQNYLMQHFRDNFIALFPQYISYYMKYQNMLNMIIHSIAIKDKDHPFAGAVVKKVLEDIENAENIIDHTTIQNYAYQSKYAMLYLSIITHF.

It belongs to the asfivirus M448R family.

It is found in the virion. This African swine fever virus (isolate Pig/Kenya/KEN-50/1950) (ASFV) protein is Putative RNA-ligase.